The sequence spans 168 residues: RxLR effector protein PITG_12737 (168 aa).

A signal peptide spans 1–20 (MRACAILVVAAAAVLTGSTA). Residues 54 to 77 (RRLRKHKTVNTNSEMEYESEAEAR) carry the RxLR-dEER motif.

Belongs to the RxLR effector family.

The protein resides in the secreted. Its subcellular location is the host nucleus. It localises to the host cytoplasm. Functionally, effector that enhances P.infestans colonization of Nicotiana benthamiana leaves. The polypeptide is RxLR effector protein PITG_12737 (Phytophthora infestans (strain T30-4) (Potato late blight agent)).